A 1960-amino-acid polypeptide reads, in one-letter code: Transcription factor 20 (1960 aa).

The segment covering 1-18 (MQSFREQSSYHGNQQSYP) has biased composition (polar residues). The tract at residues 1–287 (MQSFREQSSY…GSNAQAYGTQ (287 aa)) is disordered. The segment covering 42-60 (GGTGGSSGSSGSGSGGGRR) has biased composition (gly residues). The residue at position 60 (arginine 60) is an Omega-N-methylarginine. A compositionally biased stretch (low complexity) spans 61 to 75 (GAAAAAAAMASETSG). Residues 122 to 131 (QGSSFGNQYG) are compositionally biased toward polar residues. Residues 164–192 (SAQYQQQASSQQQQQQVQQLRQQLYQSHQ) show a composition bias toward low complexity. Polar residues predominate over residues 193 to 219 (PLPQATGQPASSSSHLQPMQRPSTLPS). Positions 236–259 (QSSASSSSSSSFPSPQRFSQSGQS) are enriched in low complexity. Polar residues-rich tracts occupy residues 260–270 (YDGSYNVNAGS) and 277–287 (VGSNAQAYGTQ). Lysine 304 is covalently cross-linked (Glycyl lysine isopeptide (Lys-Gly) (interchain with G-Cter in SUMO2)). 2 disordered regions span residues 305-328 (IPQG…SQHV) and 360-392 (FHQN…LMQT). Low complexity-rich tracts occupy residues 306-322 (PQGT…QQQQ) and 368-388 (SNPS…TPSP). Phosphoserine occurs at positions 419 and 430. The interval 476–748 (SDALTPQKKT…HGERKGRNEK (273 aa)) is disordered. Polar residues-rich tracts occupy residues 497-508 (SCTNSEGSSQPE) and 537-547 (LSGQSTSSDTT). 4 positions are modified to phosphoserine: serine 538, serine 559, serine 574, and serine 583. Lysine 602 carries the post-translational modification N6-acetyllysine. The span at 616–628 (RVEKPGGQDKGSQ) shows a compositional bias: basic and acidic residues. Position 640 is a phosphoserine (serine 640). The span at 665–677 (GNKNGDNNSNHNG) shows a compositional bias: low complexity. Residues 693–702 (TSRTEPSKSP) show a composition bias toward polar residues. Glycyl lysine isopeptide (Lys-Gly) (interchain with G-Cter in SUMO2) cross-links involve residues lysine 710, lysine 733, lysine 748, lysine 823, lysine 832, and lysine 844. Over residues 732–748 (EKGDFTGHGERKGRNEK) the composition is skewed to basic and acidic residues. Serine 871 carries the phosphoserine modification. Glycyl lysine isopeptide (Lys-Gly) (interchain with G-Cter in SUMO2) cross-links involve residues lysine 920 and lysine 922. Positions 920 to 1037 (KLKSQSGQIK…GDPHHMNPHM (118 aa)) are disordered. A Glycyl lysine isopeptide (Lys-Gly) (interchain with G-Cter in SUMO1); alternate cross-link involves residue lysine 929. Residue lysine 929 forms a Glycyl lysine isopeptide (Lys-Gly) (interchain with G-Cter in SUMO2); alternate linkage. The segment covering 936-945 (SKSQASFNNK) has biased composition (polar residues). Residues 946–961 (KSGDHCHPPSIKHESY) show a composition bias toward basic and acidic residues. Residue lysine 957 forms a Glycyl lysine isopeptide (Lys-Gly) (interchain with G-Cter in SUMO2) linkage. Phosphoserine is present on residues serine 966 and serine 1005. Lysine 1015 participates in a covalent cross-link: Glycyl lysine isopeptide (Lys-Gly) (interchain with G-Cter in SUMO2). At arginine 1024 the chain carries Omega-N-methylarginine. Serine 1053 is subject to Phosphoserine. Glycyl lysine isopeptide (Lys-Gly) (interchain with G-Cter in SUMO2) cross-links involve residues lysine 1086, lysine 1098, lysine 1137, lysine 1173, lysine 1178, lysine 1183, lysine 1210, lysine 1231, lysine 1267, and lysine 1274. Disordered regions lie at residues 1110-1142 (AAAQ…DKDG), 1162-1285 (RCLM…GRLL), and 1303-1331 (SHSQ…CPAV). Residues 1130–1142 (DRVRSPLKNDKDG) are compositionally biased toward basic and acidic residues. Residues 1170-1191 (LPNKGMELKHGSQKLQESCWDL) form a leucine-zipper region. The Nuclear localization signal signature appears at 1254 to 1268 (RRRVRSFISPIPSKR). Over residues 1304–1318 (HSQDIKSIPKRDSSK) the composition is skewed to basic and acidic residues. Residue serine 1305 is modified to Phosphoserine. A Glycyl lysine isopeptide (Lys-Gly) (interchain with G-Cter in SUMO2) cross-link involves residue lysine 1309. Position 1335 is a phosphoserine (serine 1335). Lysine 1338 is covalently cross-linked (Glycyl lysine isopeptide (Lys-Gly) (interchain with G-Cter in SUMO2)). Phosphoserine is present on serine 1361. The disordered stretch occupies residues 1384–1607 (DILSLKSGPP…TKQAVPIVEP (224 aa)). Glycyl lysine isopeptide (Lys-Gly) (interchain with G-Cter in SUMO2) cross-links involve residues lysine 1389, lysine 1409, lysine 1428, and lysine 1446. Over residues 1424 to 1451 (LHVEKPLPRSSEEWRGSVDDKVKTETHA) the composition is skewed to basic and acidic residues. Residues 1464 to 1477 (MTSTTSQKPGSNQG) show a composition bias toward polar residues. Lysine 1510 participates in a covalent cross-link: Glycyl lysine isopeptide (Lys-Gly) (interchain with G-Cter in SUMO2). Serine 1522 is modified (phosphoserine). Residue lysine 1524 forms a Glycyl lysine isopeptide (Lys-Gly) (interchain with G-Cter in SUMO2) linkage. The segment at residues 1537 to 1551 (GKKKGRPIGSVNKQK) is a DNA-binding region (a.T hook). Positions 1555 to 1566 (QPPPPPPQPPQI) are enriched in pro residues. Residues 1576–1600 (KPKKQRQRRERRKPGAQPRKRKTKQ) carry the Nuclear localization signal motif. Residues 1578-1599 (KKQRQRRERRKPGAQPRKRKTK) are compositionally biased toward basic residues. A Glycyl lysine isopeptide (Lys-Gly) (interchain with G-Cter in SUMO2) cross-link involves residue lysine 1613. Disordered stretches follow at residues 1660-1683 (LVRG…KALP) and 1732-1839 (TLPK…PELE). Serine 1669 carries the post-translational modification Phosphoserine. Phosphothreonine occurs at positions 1671, 1762, and 1764. The Nuclear localization signal signature appears at 1785 to 1792 (RFKRRHRS). The segment at 1829-1865 (PTTSEGGPELELQIPELPLDSNEFWVHEGCILWANGI) adopts a C2HC pre-PHD-type; degenerate zinc-finger fold. The PHD-type zinc-finger motif lies at 1885–1933 (MKCSHCQEAGATLGCYNKGCSFRYHYPCAIDADCLLHEENFSVRCPKHK). The tract at residues 1939–1960 (PLPPLQNKTAKGSLSTEQSERG) is disordered. The span at 1944–1960 (QNKTAKGSLSTEQSERG) shows a compositional bias: polar residues.

In terms of assembly, homodimer. Interacts with RNF4 and JUN. In terms of tissue distribution, expressed in most tissues, except in ovary and prostate. Isoform 1 is exclusively expressed in brain, heart and testis, and this form predominates in liver and kidney. Isoform 2 predominates in lung.

Its subcellular location is the nucleus. In terms of biological role, transcriptional activator that binds to the regulatory region of MMP3 and thereby controls stromelysin expression. It stimulates the activity of various transcriptional activators such as JUN, SP1, PAX6 and ETS1, suggesting a function as a coactivator. The protein is Transcription factor 20 (TCF20) of Homo sapiens (Human).